A 234-amino-acid chain; its full sequence is Segregation and condensation protein A (234 aa).

The protein belongs to the ScpA family. As to quaternary structure, component of a cohesin-like complex composed of ScpA, ScpB and the Smc homodimer, in which ScpA and ScpB bind to the head domain of Smc. The presence of the three proteins is required for the association of the complex with DNA.

It is found in the cytoplasm. In terms of biological role, participates in chromosomal partition during cell division. May act via the formation of a condensin-like complex containing Smc and ScpB that pull DNA away from mid-cell into both cell halves. The protein is Segregation and condensation protein A of Streptococcus pyogenes serotype M18 (strain MGAS8232).